A 1699-amino-acid chain; its full sequence is Hybrid signal transduction histidine kinase E (1699 aa).

Disordered regions lie at residues Met1–Asn32 and Asn58–Val97. The segment covering Asn7–Asn32 has biased composition (low complexity). The next 6 membrane-spanning stretches (helical) occupy residues Cys142–Leu162, Ser164–Thr184, Leu191–Ile211, Leu238–Pro258, Phe262–Ile282, and Asn295–Ile315. Polar residues predominate over residues Ile412–Tyr432. Disordered stretches follow at residues Ile412–Asn439 and Leu542–Asn593. Low complexity predominate over residues Asn544–Asn593. The Histidine kinase domain maps to Thr678–Thr950. His681 carries the post-translational modification Phosphohistidine; by autocatalysis. 5 disordered regions span residues Asn819–Asn866, Asn1018–Asn1054, Lys1186–Ser1239, Met1252–Asn1294, and Ser1351–Pro1406. A compositionally biased stretch (polar residues) spans Met1198–Asn1212. Residues Ser1219 to Ser1239 are compositionally biased toward low complexity. Residues Lys1271–Leu1282 are compositionally biased toward polar residues. Low complexity-rich tracts occupy residues Asn1283–Asn1294 and Asn1355–Asn1392. The region spanning Asn1575–Gly1695 is the Response regulatory domain. Asp1625 is modified (4-aspartylphosphate).

It is found in the membrane. The catalysed reaction is ATP + protein L-histidine = ADP + protein N-phospho-L-histidine.. In terms of biological role, may act in a signal transduction pathway. This protein undergoes an ATP-dependent autophosphorylation at a conserved histidine residue in the kinase core, and a phosphoryl group is then transferred to a conserved aspartate residue in the receiver domain. The protein is Hybrid signal transduction histidine kinase E (dhkE) of Dictyostelium discoideum (Social amoeba).